We begin with the raw amino-acid sequence, 1410 residues long: non-specific serine/threonine protein kinase (1410 aa).

In terms of domain architecture, Protein kinase spans 27-299 (THYVSQLNNS…LLEKYRTIYF (273 aa)). ATP is bound by residues 33–41 (LNNSRFLKT) and Lys54. Asp147 acts as the Proton acceptor in catalysis. HEAT repeat units lie at residues 441–478 (TKLD…EVKH), 485–525 (NIFV…KANL), 556–594 (RKLQ…YFGR), 596–633 (KTND…LLGP), and 635–672 (TMEQ…TRFV). 3 WD repeats span residues 1037 to 1076 (FDGT…NEKS), 1187 to 1226 (ADYG…QIRA), and 1230 to 1273 (GESL…CKHV).

This sequence belongs to the protein kinase superfamily. Ser/Thr protein kinase family. In terms of assembly, component of the autophagy-specific VPS34 PI3-kinase complex I composed of VPS15, VPS30, VPS34, ATG14 and ATG38; and of the VPS34 PI3-kinase complex II composed of VPS15, VPS30, VPS34 and VPS38. Post-translationally, autophosphorylated.

The protein localises to the golgi apparatus. The protein resides in the trans-Golgi network membrane. Its subcellular location is the endosome membrane. It catalyses the reaction L-seryl-[protein] + ATP = O-phospho-L-seryl-[protein] + ADP + H(+). It carries out the reaction L-threonyl-[protein] + ATP = O-phospho-L-threonyl-[protein] + ADP + H(+). Serine/threonine-protein kinase that plays a role in signaling in modulation of host immune response, intracellular survival and virulence. Required for impediment of phagosomal maturation in THP-1 macrophages. Regulatory subunit of the autophagy-specific VPS34 PI3-kinase complex I essential to recruit the ATG8-phosphatidylinositol conjugate and the ATG12-ATG5 conjugate to the pre-autophagosomal structure. Within the PS34 PI3-kinase complex I, VPS15-mediated phosphorylation of VPS34 may be required for recruiting VPS34 to the membrane but not for activation of its PI3K activity. Is also involved in endosome-to-Golgi retrograde transport as part of the VPS34 PI3-kinase complex II. This second complex is required for the endosome-to-Golgi retrieval of PEP1 and KEX2, and the recruitment of VPS5 and VPS7, two components of the retromer complex, to endosomal membranes (probably through the synthesis of a specific pool of phosphatidylinositol 3-phosphate recruiting the retromer to the endosomes). By regulating VPS34 kinase activity, VPS15 appears to be essential for the efficient delivery of soluble hydrolases to the yeast vacuole. In Candida glabrata (strain ATCC 2001 / BCRC 20586 / JCM 3761 / NBRC 0622 / NRRL Y-65 / CBS 138) (Yeast), this protein is non-specific serine/threonine protein kinase.